Here is a 310-residue protein sequence, read N- to C-terminus: Retrotransposon Gag-like protein 4 (310 aa).

A CCHC-type zinc finger spans residues 278 to 295 (QLCLYCSQSGHFTRDCLA).

Functionally, involved in cognitive function in the brain, possibly via the noradrenergic system. The polypeptide is Retrotransposon Gag-like protein 4 (Homo sapiens (Human)).